The primary structure comprises 299 residues: YjeF N-terminal domain-containing protein 3 (299 aa).

A YjeF N-terminal domain is found at 74 to 287 (AAALERELLE…DVRRKFALRL (214 aa)).

As to quaternary structure, interacts with APOA1. Binds to HDL. Expressed in theca cells in ovary and in Leydig cells in testis (at protein level). Also expressed in brain and mammary gland.

In terms of biological role, may accelerate cholesterol efflux from endothelial cells to high-density lipoprotein (HDL) and thereby regulates angiogenesis. May orchestrate hematopoietic stem and progenitor cell emergence from the hemogenic endothelium, a type of specialized endothelium manifesting hematopoietic potential. YJEFN3-mediated cholesterol efflux activates endothelial SREBF2, the master transcription factor for cholesterol biosynthesis, which in turn transactivates NOTCH and promotes hematopoietic stem and progenitor cell emergence. May play a role in spermiogenesis and oogenesis. The sequence is that of YjeF N-terminal domain-containing protein 3 (YJEFN3) from Homo sapiens (Human).